Reading from the N-terminus, the 270-residue chain is Tryptophan synthase alpha chain (270 aa).

Catalysis depends on proton acceptor residues E49 and D60.

Belongs to the TrpA family. As to quaternary structure, tetramer of two alpha and two beta chains.

The enzyme catalyses (1S,2R)-1-C-(indol-3-yl)glycerol 3-phosphate + L-serine = D-glyceraldehyde 3-phosphate + L-tryptophan + H2O. It functions in the pathway amino-acid biosynthesis; L-tryptophan biosynthesis; L-tryptophan from chorismate: step 5/5. Its function is as follows. The alpha subunit is responsible for the aldol cleavage of indoleglycerol phosphate to indole and glyceraldehyde 3-phosphate. This is Tryptophan synthase alpha chain from Gluconobacter oxydans (strain 621H) (Gluconobacter suboxydans).